The chain runs to 92 residues: DNA/RNA-binding protein Alba (92 aa).

Lysine 11 carries the post-translational modification N6-acetyllysine.

The protein belongs to the histone-like Alba family. Post-translationally, acetylated. Acetylation at Lys-11 decreases DNA-binding affinity.

It is found in the cytoplasm. It localises to the chromosome. In terms of biological role, binds double-stranded DNA tightly but without sequence specificity. Involved in DNA compaction. This Pyrobaculum aerophilum (strain ATCC 51768 / DSM 7523 / JCM 9630 / CIP 104966 / NBRC 100827 / IM2) protein is DNA/RNA-binding protein Alba.